We begin with the raw amino-acid sequence, 100 residues long: Mitochondrial import inner membrane translocase subunit Tim10 B (100 aa).

Residues 25 to 49 (CFQRCVPSLHHRALDAEEEACLHSC) carry the Twin CX3C motif motif. Disulfide bonds link Cys-25–Cys-49 and Cys-29–Cys-45.

Belongs to the small Tim family. In terms of assembly, component of the TIM22 complex, which core is composed of TIMM22, associated with TIMM10 (TIMM10A and/or TIMM10B), TIMM9, AGK and TIMM29.

It is found in the mitochondrion inner membrane. Its function is as follows. Component of the TIM22 complex, a complex that mediates the import and insertion of multi-pass transmembrane proteins into the mitochondrial inner membrane. The TIM22 complex forms a twin-pore translocase that uses the membrane potential as the external driving force. In the TIM22 complex, it may act as a docking point for the soluble 70 kDa complex that guides the target proteins in transit through the aqueous mitochondrial intermembrane space. This chain is Mitochondrial import inner membrane translocase subunit Tim10 B (Timm10b), found in Rattus norvegicus (Rat).